Here is a 406-residue protein sequence, read N- to C-terminus: Haptoglobin (406 aa).

Positions 1 to 18 are cleaved as a signal peptide; it reads MSALGAVIALLLWGQLFA. 2 Sushi domains span residues 31-88 and 90-147; these read DGCP…ECEA. 5 disulfide bridges follow: Cys-52–Cys-86, Cys-111–Cys-145, Cys-149–Cys-266, Cys-309–Cys-340, and Cys-351–Cys-381. The region spanning 162 to 404 is the Peptidase S1 domain; it reads ILGGHLDAKG…IQDWVQKTIA (243 aa). N-linked (GlcNAc...) (complex) asparagine glycosylation occurs at Asn-184. N-linked (GlcNAc...) asparagine glycosylation is found at Asn-207 and Asn-211. N-linked (GlcNAc...) (complex) asparagine glycosylation occurs at Asn-241. Residues 318–323 are interaction with CD163; the sequence is VPEKKT.

The protein belongs to the peptidase S1 family. As to quaternary structure, tetramer of two alpha and two beta chains; disulfide-linked. The hemoglobin/haptoglobin complex is composed of a haptoglobin dimer bound to two hemoglobin alpha-beta dimers. Interacts with CD163. Interacts with ERGIC3. Expressed by the liver and secreted in plasma.

It is found in the secreted. In terms of biological role, as a result of hemolysis, hemoglobin is found to accumulate in the kidney and is secreted in the urine. Haptoglobin captures, and combines with free plasma hemoglobin to allow hepatic recycling of heme iron and to prevent kidney damage. Haptoglobin also acts as an antioxidant, has antibacterial activity, and plays a role in modulating many aspects of the acute phase response. Hemoglobin/haptoglobin complexes are rapidly cleared by the macrophage CD163 scavenger receptor expressed on the surface of liver Kupfer cells through an endocytic lysosomal degradation pathway. The uncleaved form of allele alpha-2 (2-2), known as zonulin, plays a role in intestinal permeability, allowing intercellular tight junction disassembly, and controlling the equilibrium between tolerance and immunity to non-self antigens. The sequence is that of Haptoglobin (HP) from Homo sapiens (Human).